Consider the following 450-residue polypeptide: Nuclear hormone receptor family member nhr-40 (450 aa).

Positions 28-103 form a DNA-binding region, nuclear receptor; it reads GTLCVVCSDF…MGMDPKAIQH (76 aa). 2 NR C4-type zinc fingers span residues 31 to 51 and 67 to 91; these read CVVCSDFASGIHYSVASCNGC and CQFSGDCVVGKSVRCVCRSCRLKKC. An NR LBD domain is found at 173–450; that stretch reads DVKAVIEDLL…LIDQLIIVGL (278 aa).

This sequence belongs to the nuclear hormone receptor family. Isoform b: Expressed in body wall muscle cells, pharyngeal muscles, rectal gland cells, vulval and uterine muscles and neurons in the head and ventral nerve cord. Isoform c: Expressed in body wall muscle cells, neurons in the head, nerve ring, ventral and dorsal nerve cords and epidermal cells in the tail.

It is found in the nucleus. In terms of biological role, orphan nuclear receptor. Plays a role in morphogenesis and elongation during embryonic and larval development. Plays a role in muscle formation and motility. This chain is Nuclear hormone receptor family member nhr-40, found in Caenorhabditis elegans.